The sequence spans 80 residues: Cell division activator CedA (80 aa).

This sequence belongs to the CedA family.

Functionally, activates the cell division inhibited by chromosomal DNA over-replication. The polypeptide is Cell division activator CedA (Salmonella choleraesuis (strain SC-B67)).